Here is a 1244-residue protein sequence, read N- to C-terminus: Mitotic chromosome and X-chromosome-associated protein mix-1 (1244 aa).

32 to 39 (GYNGSGKS) is a binding site for ATP. Positions 247 to 355 (VKKSAKEIED…AKRKEHEDSK (109 aa)) form a coiled coil. Basic and acidic residues predominate over residues 337–355 (LSKDREVLDAKRKEHEDSK). The tract at residues 337–369 (LSKDREVLDAKRKEHEDSKAANSKDIQSQSDDE) is disordered. Residues 356-365 (AANSKDIQSQ) are compositionally biased toward polar residues. The stretch at 415–472 (ITAAKKRGERLHNQIKHLEGEKATLSARSKSDIGSADNYQKEVDEINKQLQLLGFNID) forms a coiled coil. An SMC hinge domain is found at 526-654 (DVFGYVAHLI…DSLDVAREIA (129 aa)). Coiled coils occupy residues 701–946 (PQIE…RKEA) and 975–1037 (YTVS…IATL). The segment covering 919-932 (AKTKSKREEKEKEL) has biased composition (basic and acidic residues). A disordered region spans residues 919-943 (AKTKSKREEKEKELTSLQQSEASNR). The span at 1216–1232 (DAAAKKGAQKNDKEPPK) shows a compositional bias: basic and acidic residues. Residues 1216–1244 (DAAAKKGAQKNDKEPPKKKPIVVDDDDFE) form a disordered region.

It belongs to the SMC family. SMC2 subfamily. In terms of assembly, component of the condensin I complex, which contains the mix-1/SMC2 and smc-4/SMC4 heterodimer, and three non SMC subunits that probably regulate the complex: dpy-26, capg-1 and dpy-28. Within the complex, interacts with smc-4, dpy-26, dpy-28 and capg-1. Interaction with smc-4 is required for mitotic chromosome localization. Component of the condensin II complex, which contains the mix-1/SMC2 and smc-4/SMC4 heterodimer, and three non SMC subunits, capg-2, kle-2 and hcp-6 that probably regulate the complex. Within the complex, interacts with smc-4, capg-2, kle-2 and hcp-6. Also a component of the condensin-like dosage compensation complex, which contains the mix-1/SMC2 and dpy-27/SMC4 heterodimer, and three non SMC subunits that probably regulate the complex: dpy-26, capg-1 and dpy-28. Within the complex, interacts with dpy-27, dpy-26, capg-1 and dpy-28. Requires capg-1 for hermaphrodite X chromosome localization. Interacts with smcl-1. In terms of tissue distribution, expressed in embryos and in adult somatic and germline tissues (at protein level).

It localises to the nucleus. The protein localises to the chromosome. Functionally, essential protein required for both chromosome condensation and segregation and X-chromosome dosage compensation depending on its binding partners. Central component of the condensin I complex, a complex required for conversion of interphase chromatin into mitotic-like condense chromosomes. The condensin complex introduces positive supercoils into relaxed DNA in the presence of type I topoisomerases. Converts nicked DNA into positive knotted forms in the presence of type II topoisomerases. Central component of the condensin II complex, a complex that seems to play a role in prophase chromosome condensation and organization. Both the condensin complex I and II play a role in meiotic and mitotic chromosome segregation. Plays a role in robust cytokinesis upon the presence of chromatin obstructions. Also a member of the condensin I-like dosage compensation complex that associates specifically with hermaphrodite X chromosomes to reduce their gene transcription during interphase. The protein is Mitotic chromosome and X-chromosome-associated protein mix-1 (mix-1) of Caenorhabditis elegans.